An 837-amino-acid chain; its full sequence is MARGERRRRAVPAEGVRTAERAARGGPGRRDGRGGGPRSTAGGVALAVVVLSLALGMSGRWVLAWYRARRAVTLHSAPPVLPADSSSPAVAPDLFWGTYRPHVYFGMKTRSPKPLLTGLMWAQQGTTPGTPKLRHTCEQGDGVGPYGWEFHDGLSFGRQHIQDGALRLTTEFVKRPGGQHGGDWSWRVTVEPQDSGTSALPLVSLFFYVVTDGKEVLLPEVGAKGQLKFISGHTSELGDFRFTLLPPTSPGDTAPKYGSYNVFWTSNPGLPLLTEMVKSRLNSWFQHRPPGAPPERYLGLPGSLKWEDRGPSGQGQGQFLIQQVTLKIPISIEFVFESGSAQAGGNQALPRLAGSLLTQALESHAEGFRERFEKTFQLKEKGLSSGEQVLGQAALSGLLGGIGYFYGQGLVLPDIGVEGSEQKVDPALFPPVPLFTAVPSRSFFPRGFLWDEGFHQLVVQRWDPSLTREALGHWLGLLNADGWIGREQILGDEARARVPPEFLVQRAVHANPPTLLLPVAHMLEVGDPDDLAFLRKALPRLHAWFSWLHQSQAGPLPLSYRWRGRDPALPTLLNPKTLPSGLDDYPRASHPSVTERHLDLRCWVALGARVLTRLAEHLGEAEVAAELGPLAASLEAAESLDELHWAPELGVFADFGNHTKAVQLKPRPPQGLVRVVGRPQPQLQYVDALGYVSLFPLLLRLLDPTSSRLGPLLDILADSRHLWSPFGLRSLAASSSFYGQRNSEHDPPYWRGAVWLNVNYLALGALHHYGHLEGPHQARAAKLHGELRANVVGNVWRQYQATGFLWEQYSDRDGRGMGCRPFHGWTSLVLLAMAEDY.

The segment covering 1 to 10 has biased composition (basic residues); that stretch reads MARGERRRRA. The Cytoplasmic portion of the chain corresponds to 1 to 38; the sequence is MARGERRRRAVPAEGVRTAERAARGGPGRRDGRGGGPR. The segment at 1–39 is disordered; the sequence is MARGERRRRAVPAEGVRTAERAARGGPGRRDGRGGGPRS. The Endoplasmic reticulum targeting signature appears at 3 to 9; that stretch reads RGERRRR. The segment covering 17 to 33 has biased composition (basic and acidic residues); the sequence is RTAERAARGGPGRRDGR. The chain crosses the membrane as a helical; Signal-anchor for type II membrane protein span at residues 39–59; that stretch reads STAGGVALAVVVLSLALGMSG. Topologically, residues 60-837 are lumenal; that stretch reads RWVLAWYRAR…LVLLAMAEDY (778 aa). The tract at residues 76–137 is required for endoplasmic reticulum targeting; the sequence is SAPPVLPADS…PGTPKLRHTC (62 aa). The active-site Proton donor is D583. The N-linked (GlcNAc...) asparagine glycan is linked to N657. The Proton acceptor role is filled by E807.

The protein belongs to the glycosyl hydrolase 63 family.

The protein localises to the endoplasmic reticulum membrane. The enzyme catalyses N(4)-(alpha-D-Glc-(1-&gt;2)-alpha-D-Glc-(1-&gt;3)-alpha-D-Glc-(1-&gt;3)-alpha-D-Man-(1-&gt;2)-alpha-D-Man-(1-&gt;2)-alpha-D-Man-(1-&gt;3)-[alpha-D-Man-(1-&gt;2)-alpha-D-Man-(1-&gt;3)-[alpha-D-Man-(1-&gt;2)-alpha-D-Man-(1-&gt;6)]-alpha-D-Man-(1-&gt;6)]-beta-D-Man-(1-&gt;4)-beta-D-GlcNAc-(1-&gt;4)-beta-D-GlcNAc)-L-asparaginyl-[protein] + H2O = N(4)-(alpha-D-Glc-(1-&gt;3)-alpha-D-Glc-(1-&gt;3)-alpha-D-Man-(1-&gt;2)-alpha-D-Man-(1-&gt;2)-alpha-D-Man-(1-&gt;3)-[alpha-D-Man-(1-&gt;2)-alpha-D-Man-(1-&gt;3)-[alpha-D-Man-(1-&gt;2)-alpha-D-Man-(1-&gt;6)]-alpha-D-Man-(1-&gt;6)]-beta-D-Man-(1-&gt;4)-beta-D-GlcNAc-(1-&gt;4)-beta-D-GlcNAc)-L-asparaginyl-[protein] + beta-D-glucose. Its pathway is glycan metabolism; N-glycan degradation. Inhibited by 1-deoxynojirimycin (40% inhibition) and N,N-dimethyl-deoxynojirimycin (85% inhibition). In the context of N-glycan degradation, cleaves the distal alpha 1,2-linked glucose residue from the Glc(3)Man(9)GlcNAc(2) oligosaccharide precursor in a highly specific manner. This chain is Mannosyl-oligosaccharide glucosidase, found in Homo sapiens (Human).